Consider the following 131-residue polypeptide: uncharacterized protein (131 aa).

2 helical membrane passes run 68–88 (VVRATPIIGPYAGLPVIVAPI) and 94–114 (VLGAIGVVDITAGIFEDIVAI).

Its subcellular location is the cell membrane. This is an uncharacterized protein from Methanocaldococcus jannaschii (strain ATCC 43067 / DSM 2661 / JAL-1 / JCM 10045 / NBRC 100440) (Methanococcus jannaschii).